The following is an 85-amino-acid chain: UPF0386 protein HNE_3437 (85 aa).

This sequence belongs to the UPF0386 family.

The polypeptide is UPF0386 protein HNE_3437 (Hyphomonas neptunium (strain ATCC 15444)).